A 502-amino-acid chain; its full sequence is Alpha-ketoglutarate-dependent dioxygenase FTO (502 aa).

A fe2OG dioxygenase domain region spans residues 32-324 (TPKDDEFYQQ…SSTHRVAECS (293 aa)). Residues Arg-96 and Tyr-108 each coordinate substrate. Asn-202 serves as a coordination point for 2-oxoglutarate. Positions 210–221 (PYLKEEPYFGMG) are loop L1; predicted to block binding of double-stranded DNA or RNA. At Lys-213 the chain carries N6-acetyllysine. Positions 228 and 230 each coordinate Fe cation. 228-231 (HHDE) lines the substrate pocket. Tyr-292 provides a ligand contact to 2-oxoglutarate. His-304 contacts Fe cation. 2-oxoglutarate-binding positions include 313–315 (RFS), Thr-317, and Arg-319.

It belongs to the fto family. As to quaternary structure, monomer. May also exist as homodimer. It depends on Fe(2+) as a cofactor. Ubiquitous. Detected in brain, brain cortex, hypothalamus, cerebellum, liver, pancreas, heart, kidney, white adipose tissue and skeletal muscle. Most abundant in the brain, particularly in hypothalamic nuclei governing energy balance.

The protein localises to the nucleus. It localises to the nucleus speckle. The protein resides in the cytoplasm. It carries out the reaction a 5'-end (N(7)-methyl 5'-triphosphoguanosine)-(N(6),2'-O-dimethyladenosine) in mRNA + 2-oxoglutarate + O2 = a 5'-end (N(7)-methyl 5'-triphosphoguanosine)-(2'-O-methyladenosine) in mRNA + formaldehyde + succinate + CO2. It catalyses the reaction an N(6)-methyladenosine in mRNA + 2-oxoglutarate + O2 = an adenosine in mRNA + formaldehyde + succinate + CO2. The enzyme catalyses N(6)-methyladenosine in U6 snRNA + 2-oxoglutarate + O2 = adenosine in U6 snRNA + formaldehyde + succinate + CO2. The catalysed reaction is a 5'-end (N(7)-methyl 5'-triphosphoguanosine)-(N(6),2'-O-dimethyladenosine) in U6 snRNA + 2-oxoglutarate + O2 = a 5'-end (N(7)-methyl 5'-triphosphoguanosine)-(2'-O-methyladenosine) in U6 snRNA + formaldehyde + succinate + CO2. It carries out the reaction an N(1)-methyladenosine in tRNA + 2-oxoglutarate + O2 = an adenosine in tRNA + formaldehyde + succinate + CO2. With respect to regulation, activated by ascorbate. Inhibited by N-oxalylglycine, fumarate and succinate. Its function is as follows. RNA demethylase that mediates oxidative demethylation of different RNA species, such as mRNAs, tRNAs and snRNAs, and acts as a regulator of fat mass, adipogenesis and energy homeostasis. Specifically demethylates N(6)-methyladenosine (m6A) RNA, the most prevalent internal modification of messenger RNA (mRNA) in higher eukaryotes. M6A demethylation by FTO affects mRNA expression and stability. Also able to demethylate m6A in U6 small nuclear RNA (snRNA). Mediates demethylation of N(6),2'-O-dimethyladenosine cap (m6A(m)), by demethylating the N(6)-methyladenosine at the second transcribed position of mRNAs and U6 snRNA. Demethylation of m6A(m) in the 5'-cap by FTO affects mRNA stability by promoting susceptibility to decapping. Also acts as a tRNA demethylase by removing N(1)-methyladenine from various tRNAs. Has no activity towards 1-methylguanine. Has no detectable activity towards double-stranded DNA. Also able to repair alkylated DNA and RNA by oxidative demethylation: demethylates single-stranded RNA containing 3-methyluracil, single-stranded DNA containing 3-methylthymine and has low demethylase activity towards single-stranded DNA containing 1-methyladenine or 3-methylcytosine. Ability to repair alkylated DNA and RNA is however unsure in vivo. Involved in the regulation of fat mass, adipogenesis and body weight, thereby contributing to the regulation of body size and body fat accumulation. Involved in the regulation of thermogenesis and the control of adipocyte differentiation into brown or white fat cells. Regulates activity of the dopaminergic midbrain circuitry via its ability to demethylate m6A in mRNAs. This Mus musculus (Mouse) protein is Alpha-ketoglutarate-dependent dioxygenase FTO.